The chain runs to 470 residues: Glutamate--tRNA ligase (470 aa).

Residues 12–22 carry the 'HIGH' region motif; it reads PSPTGIFHVGG. Residues cysteine 103, cysteine 105, cysteine 125, and aspartate 127 each coordinate Zn(2+). Residues 236–240 carry the 'KMSKS' region motif; it reads KLSKR. An ATP-binding site is contributed by lysine 239.

The protein belongs to the class-I aminoacyl-tRNA synthetase family. Glutamate--tRNA ligase type 1 subfamily. Monomer. Zn(2+) is required as a cofactor.

Its subcellular location is the cytoplasm. It catalyses the reaction tRNA(Glu) + L-glutamate + ATP = L-glutamyl-tRNA(Glu) + AMP + diphosphate. Catalyzes the attachment of glutamate to tRNA(Glu) in a two-step reaction: glutamate is first activated by ATP to form Glu-AMP and then transferred to the acceptor end of tRNA(Glu). The chain is Glutamate--tRNA ligase from Frankia casuarinae (strain DSM 45818 / CECT 9043 / HFP020203 / CcI3).